An 87-amino-acid polypeptide reads, in one-letter code: Probable acyl carrier protein PigG (87 aa).

The 78-residue stretch at 1–78 folds into the Carrier domain; that stretch reads MLESKLINHI…SMVALVQRLK (78 aa). At S36 the chain carries O-(pantetheine 4'-phosphoryl)serine.

It functions in the pathway antibiotic biosynthesis; prodigiosin biosynthesis. Functionally, involved in the biosynthesis of 4-methoxy-2,2'-bipyrrole-5-carbaldehyde (MBC), one of the terminal products involved in the biosynthesis of the red antibiotic prodigiosin (Pig). Carrier of the L-prolyl group transferred from L-prolyl-AMP by PigI. The sequence is that of Probable acyl carrier protein PigG from Serratia sp. (strain ATCC 39006) (Prodigiosinella confusarubida).